A 260-amino-acid chain; its full sequence is UPF0246 protein APL_0602 (260 aa).

It belongs to the UPF0246 family.

The sequence is that of UPF0246 protein APL_0602 from Actinobacillus pleuropneumoniae serotype 5b (strain L20).